The primary structure comprises 429 residues: Enolase (429 aa).

Position 162 (glutamine 162) interacts with (2R)-2-phosphoglycerate. Glutamate 204 functions as the Proton donor in the catalytic mechanism. Residues aspartate 241, glutamate 288, and aspartate 315 each coordinate Mg(2+). (2R)-2-phosphoglycerate-binding residues include lysine 340, arginine 369, serine 370, and lysine 391. The active-site Proton acceptor is lysine 340.

It belongs to the enolase family. It depends on Mg(2+) as a cofactor.

It is found in the cytoplasm. Its subcellular location is the secreted. The protein localises to the cell surface. It catalyses the reaction (2R)-2-phosphoglycerate = phosphoenolpyruvate + H2O. Its pathway is carbohydrate degradation; glycolysis; pyruvate from D-glyceraldehyde 3-phosphate: step 4/5. In terms of biological role, catalyzes the reversible conversion of 2-phosphoglycerate (2-PG) into phosphoenolpyruvate (PEP). It is essential for the degradation of carbohydrates via glycolysis. This chain is Enolase, found in Bacteroides fragilis (strain ATCC 25285 / DSM 2151 / CCUG 4856 / JCM 11019 / LMG 10263 / NCTC 9343 / Onslow / VPI 2553 / EN-2).